We begin with the raw amino-acid sequence, 254 residues long: 3-deoxy-manno-octulosonate cytidylyltransferase (254 aa).

The protein belongs to the KdsB family.

It localises to the cytoplasm. The catalysed reaction is 3-deoxy-alpha-D-manno-oct-2-ulosonate + CTP = CMP-3-deoxy-beta-D-manno-octulosonate + diphosphate. It functions in the pathway nucleotide-sugar biosynthesis; CMP-3-deoxy-D-manno-octulosonate biosynthesis; CMP-3-deoxy-D-manno-octulosonate from 3-deoxy-D-manno-octulosonate and CTP: step 1/1. It participates in bacterial outer membrane biogenesis; lipopolysaccharide biosynthesis. In terms of biological role, activates KDO (a required 8-carbon sugar) for incorporation into bacterial lipopolysaccharide in Gram-negative bacteria. This Pseudomonas putida (strain W619) protein is 3-deoxy-manno-octulosonate cytidylyltransferase.